A 91-amino-acid polypeptide reads, in one-letter code: Large ribosomal subunit protein uL23c (91 aa).

Belongs to the universal ribosomal protein uL23 family. As to quaternary structure, part of the 50S ribosomal subunit.

Its subcellular location is the plastid. It localises to the chloroplast. In terms of biological role, binds to 23S rRNA. This Pinus thunbergii (Japanese black pine) protein is Large ribosomal subunit protein uL23c (rpl23).